A 428-amino-acid chain; its full sequence is 3-phosphoshikimate 1-carboxyvinyltransferase (428 aa).

3-phosphoshikimate-binding residues include lysine 21, serine 22, and arginine 26. Lysine 21 contributes to the phosphoenolpyruvate binding site. 2 residues coordinate phosphoenolpyruvate: glycine 91 and arginine 119. Residues serine 164, glutamine 166, aspartate 313, and lysine 340 each coordinate 3-phosphoshikimate. Glutamine 166 is a binding site for phosphoenolpyruvate. Residue aspartate 313 is the Proton acceptor of the active site. Residues arginine 344 and arginine 386 each contribute to the phosphoenolpyruvate site.

This sequence belongs to the EPSP synthase family. Monomer.

It localises to the cytoplasm. It carries out the reaction 3-phosphoshikimate + phosphoenolpyruvate = 5-O-(1-carboxyvinyl)-3-phosphoshikimate + phosphate. Its pathway is metabolic intermediate biosynthesis; chorismate biosynthesis; chorismate from D-erythrose 4-phosphate and phosphoenolpyruvate: step 6/7. Its function is as follows. Catalyzes the transfer of the enolpyruvyl moiety of phosphoenolpyruvate (PEP) to the 5-hydroxyl of shikimate-3-phosphate (S3P) to produce enolpyruvyl shikimate-3-phosphate and inorganic phosphate. In Campylobacter jejuni subsp. jejuni serotype O:23/36 (strain 81-176), this protein is 3-phosphoshikimate 1-carboxyvinyltransferase.